A 292-amino-acid polypeptide reads, in one-letter code: MGSKETKNTSRRDFLIKGAGAAALGAGAFAISQVPLLEKLASANEDTVKDLLPFPELIESDEIIIRMQNDVRRALKKPLNEIQWIMVIDLKKCVGCSSCTVACVSENVLPPGVVYRPVIEEEIGTFPNVTKKFTPRPCMQCEHPPCTKVCPIGATYKSEDGIVAIDYDKCIGCRYCITACPYGARTFDWGEYHTENTPEIMQYEKEPNYEYGVERVREKKNSPIGNARKCHFCKHRLHKGMLSMCVTTCIGRATYIGDKNDPESLVAELIASPRVMRLKEELGTEPNVYYLT.

A signal peptide (tat-type signal) is located at residues 1-43; it reads MGSKETKNTSRRDFLIKGAGAAALGAGAFAISQVPLLEKLASA. 4Fe-4S ferredoxin-type domains lie at 84–113, 129–160, and 161–190; these read WIMVIDLKKCVGCSSCTVACVSENVLPPGV, VTKKFTPRPCMQCEHPPCTKVCPIGATYKSED, and GIVAIDYDKCIGCRYCITACPYGARTFDWG. Positions 93, 96, 99, 103, 138, 141, 146, 150, 170, 173, 176, 180, 230, 233, 245, and 249 each coordinate [4Fe-4S] cluster.

As to quaternary structure, the complex is composed of three subunits: SrdA, SrdB and SrdC. Requires [4Fe-4S] cluster as cofactor. Post-translationally, predicted to be exported by the Tat system. The position of the signal peptide cleavage has not been experimentally proven.

The protein resides in the secreted. The enzyme catalyses selenite + a quinone + H2O = selenate + a quinol. In terms of biological role, component of the respiratory selenate reductase complex, which catalyzes the reduction of selenate to selenite. This subunit probably transfers electrons from SrdC to SrdA. The sequence is that of Selenate reductase subunit B from Mesobacillus selenatarsenatis (strain DSM 18680 / JCM 14380 / FERM P-15431 / SF-1).